A 581-amino-acid chain; its full sequence is 2-succinyl-5-enolpyruvyl-6-hydroxy-3-cyclohexene-1-carboxylate synthase (581 aa).

Belongs to the TPP enzyme family. MenD subfamily. Homodimer. It depends on Mg(2+) as a cofactor. Mn(2+) serves as cofactor. The cofactor is thiamine diphosphate.

The catalysed reaction is isochorismate + 2-oxoglutarate + H(+) = 5-enolpyruvoyl-6-hydroxy-2-succinyl-cyclohex-3-ene-1-carboxylate + CO2. Its pathway is quinol/quinone metabolism; 1,4-dihydroxy-2-naphthoate biosynthesis; 1,4-dihydroxy-2-naphthoate from chorismate: step 2/7. It participates in cofactor biosynthesis; phylloquinone biosynthesis. Its function is as follows. Catalyzes the thiamine diphosphate-dependent decarboxylation of 2-oxoglutarate and the subsequent addition of the resulting succinic semialdehyde-thiamine pyrophosphate anion to isochorismate to yield 2-succinyl-5-enolpyruvyl-6-hydroxy-3-cyclohexene-1-carboxylate (SEPHCHC). This is 2-succinyl-5-enolpyruvyl-6-hydroxy-3-cyclohexene-1-carboxylate synthase from Gloeothece citriformis (strain PCC 7424) (Cyanothece sp. (strain PCC 7424)).